Consider the following 46-residue polypeptide: Protein PsbN (46 aa).

A helical transmembrane segment spans residues 10 to 30 (VAIAVLAALLGLTGFGVYTAF).

This sequence belongs to the PsbN family.

It is found in the cellular thylakoid membrane. In terms of biological role, may play a role in photosystem I and II biogenesis. The polypeptide is Protein PsbN (Synechococcus sp. (strain WH7803)).